The following is a 450-amino-acid chain: Sorting nexin-4 (450 aa).

M1 is subject to N-acetylmethionine. The disordered stretch occupies residues M1–D46. Over residues L11 to L20 the composition is skewed to low complexity. Residues S61–W187 enclose the PX domain. A 1,2-diacyl-sn-glycero-3-phospho-(1D-myo-inositol-3-phosphate)-binding residues include R106, S108, K132, and R154.

This sequence belongs to the sorting nexin family. In terms of assembly, heterodimer; heterodimerizes with SNX7 or SNX30. Interacts with WWC1/KIBRA. Identified in a complex with WWC1/KIBRA and dynein components DYNLL1 and DYNC1I2. Interacts with BIN1.

It localises to the early endosome. The protein resides in the early endosome membrane. In terms of biological role, involved in the regulation of endocytosis and in several stages of intracellular trafficking. Plays a role in recycling endocytosed transferrin receptor and prevent its degradation. Involved in autophagosome assembly by regulating trafficking and recycling of phospholipid scramblase ATG9A. The polypeptide is Sorting nexin-4 (Mus musculus (Mouse)).